A 108-amino-acid polypeptide reads, in one-letter code: Glutaredoxin-1 (108 aa).

Positions 3–106 (EEFVQQRLAN…DILLSIGVLR (104 aa)) constitute a Glutaredoxin domain. Cysteine 23 and cysteine 26 are oxidised to a cystine.

Belongs to the glutaredoxin family.

It is found in the virion. In terms of biological role, displays thioltransferase and dehydroascorbate reductase activities. This Cynomys gunnisoni (Gunnison's prairie dog) protein is Glutaredoxin-1 (OPG075).